Consider the following 522-residue polypeptide: Major facilitator-type transporter sorT (522 aa).

A disordered region spans residues 1-21; the sequence is MSHTEPKAPVNTGEVENGHLY. A run of 12 helical transmembrane segments spans residues 52–72, 89–109, 121–141, 143–163, 183–203, 211–231, 280–300, 324–344, 366–386, 395–415, 427–447, and 457–477; these read WFIA…SSAY, VFIV…AVWA, QILW…SAGS, NVAT…SPLV, TIYC…GGFV, WVQG…IVFI, WIFL…AIIY, IGGL…VYAI, LPPA…FAWT, VSII…LPIM, ASVL…FPLF, and IHWA…FPLI.

It belongs to the major facilitator superfamily. Sugar transporter (TC 2.A.1.1) family.

It localises to the membrane. Its function is as follows. Major facilitator-type transporter; part of the gene cluster that mediates the biosynthesis of sorbicillinoids, a diverse group of yellow secondary metabolites that restrict growth of competing pathogenic fungi but not of bacteria. The protein is Major facilitator-type transporter sorT of Penicillium rubens (strain ATCC 28089 / DSM 1075 / NRRL 1951 / Wisconsin 54-1255) (Penicillium chrysogenum).